The chain runs to 49 residues: Glycolactin (49 aa).

This sequence belongs to the pancreatic ribonuclease family. Post-translationally, glycosylated. As to expression, milk.

Its subcellular location is the secreted. Its function is as follows. Manifests poly C-specific RNase activity toward yeast tRNA, elicits a dose-dependent inhibition of cell-free translation, inhibits formation of superoxide ions in vitro and inhibits the hemagglutinating activities of soybean lectin and Ricinus communis agglutinin 120. Inhibits HIV-1 reverse transcriptase. The polypeptide is Glycolactin (Bos taurus (Bovine)).